A 210-amino-acid polypeptide reads, in one-letter code: Large ribosomal subunit protein uL3 (210 aa).

The protein belongs to the universal ribosomal protein uL3 family. As to quaternary structure, part of the 50S ribosomal subunit. Forms a cluster with proteins L14 and L19.

In terms of biological role, one of the primary rRNA binding proteins, it binds directly near the 3'-end of the 23S rRNA, where it nucleates assembly of the 50S subunit. The polypeptide is Large ribosomal subunit protein uL3 (Caldicellulosiruptor saccharolyticus (strain ATCC 43494 / DSM 8903 / Tp8T 6331)).